A 248-amino-acid polypeptide reads, in one-letter code: Adenylate kinase (248 aa).

ATP is bound at residue 37-42; sequence GAGKGT. The segment at 57–86 is NMP; the sequence is SPGNLLREEMNRNSPITAQIKDYVSKGQLV. AMP is bound by residues Arg-63, 84 to 86, 111 to 114, and Gln-118; these read QLV and GFPR. An LID region spans residues 149–181; sequence GRRFDPITGNTYHIIYDPPPPDIADRVVVRTDD. Position 150 (Arg-150) interacts with ATP. Residues Arg-178 and Arg-189 each coordinate AMP.

This sequence belongs to the adenylate kinase family. As to quaternary structure, monomer.

It localises to the cytoplasm. It carries out the reaction AMP + ATP = 2 ADP. Catalyzes the reversible transfer of the terminal phosphate group between ATP and AMP. Plays an important role in cellular energy homeostasis and in adenine nucleotide metabolism. This is Adenylate kinase from Giardia intestinalis (Giardia lamblia).